The chain runs to 280 residues: Ribose-phosphate pyrophosphokinase (280 aa).

ATP contacts are provided by residues 32–34 (DGE) and 89–90 (RQ). Mg(2+) is bound by residues His-122 and Asp-160. Lys-183 is an active-site residue. Residues Arg-185, Asp-209, and 213–217 (STGGT) contribute to the D-ribose 5-phosphate site.

The protein belongs to the ribose-phosphate pyrophosphokinase family. Class III (archaeal) subfamily. Requires Mg(2+) as cofactor.

The protein resides in the cytoplasm. It carries out the reaction D-ribose 5-phosphate + ATP = 5-phospho-alpha-D-ribose 1-diphosphate + AMP + H(+). It functions in the pathway metabolic intermediate biosynthesis; 5-phospho-alpha-D-ribose 1-diphosphate biosynthesis; 5-phospho-alpha-D-ribose 1-diphosphate from D-ribose 5-phosphate (route I): step 1/1. Activated by Co(2+) and Ni(2+) ions, however Mg(2+) ion shows almost no significant effect on the activity. Equally inhibited by ADP, CTP and GTP, while dTTP and UTP are less inhibitory. In terms of biological role, involved in the biosynthesis of the central metabolite phospho-alpha-D-ribosyl-1-pyrophosphate (PRPP) via the transfer of pyrophosphoryl group from ATP to 1-hydroxyl of ribose-5-phosphate (Rib-5-P). It can also use CTP and GTP as substrates in addition to ATP. This chain is Ribose-phosphate pyrophosphokinase, found in Thermococcus kodakarensis (strain ATCC BAA-918 / JCM 12380 / KOD1) (Pyrococcus kodakaraensis (strain KOD1)).